Reading from the N-terminus, the 466-residue chain is Ribulose bisphosphate carboxylase large chain (466 aa).

Lysine 4 is modified (N6,N6,N6-trimethyllysine). Substrate contacts are provided by asparagine 113 and threonine 163. The Proton acceptor role is filled by lysine 165. Lysine 167 contributes to the substrate binding site. Mg(2+)-binding residues include lysine 191, aspartate 193, and glutamate 194. Lysine 191 is subject to N6-carboxylysine. Histidine 284 functions as the Proton acceptor in the catalytic mechanism. Residues arginine 285, histidine 317, and serine 369 each contribute to the substrate site.

This sequence belongs to the RuBisCO large chain family. Type I subfamily. Heterohexadecamer of 8 large chains and 8 small chains; disulfide-linked. The disulfide link is formed within the large subunit homodimers. The cofactor is Mg(2+). In terms of processing, the disulfide bond which can form in the large chain dimeric partners within the hexadecamer appears to be associated with oxidative stress and protein turnover.

The protein resides in the plastid. The protein localises to the chloroplast. It carries out the reaction 2 (2R)-3-phosphoglycerate + 2 H(+) = D-ribulose 1,5-bisphosphate + CO2 + H2O. It catalyses the reaction D-ribulose 1,5-bisphosphate + O2 = 2-phosphoglycolate + (2R)-3-phosphoglycerate + 2 H(+). RuBisCO catalyzes two reactions: the carboxylation of D-ribulose 1,5-bisphosphate, the primary event in carbon dioxide fixation, as well as the oxidative fragmentation of the pentose substrate in the photorespiration process. Both reactions occur simultaneously and in competition at the same active site. The polypeptide is Ribulose bisphosphate carboxylase large chain (Justicia odora (Water willow)).